The sequence spans 309 residues: tRNA pseudouridine synthase B (309 aa).

Catalysis depends on aspartate 51, which acts as the Nucleophile.

The protein belongs to the pseudouridine synthase TruB family. Type 1 subfamily.

The catalysed reaction is uridine(55) in tRNA = pseudouridine(55) in tRNA. In terms of biological role, responsible for synthesis of pseudouridine from uracil-55 in the psi GC loop of transfer RNAs. In Coxiella burnetii (strain Dugway 5J108-111), this protein is tRNA pseudouridine synthase B.